The sequence spans 264 residues: Thiazole synthase (264 aa).

The active-site Schiff-base intermediate with DXP is K106. Residues G167, 193-194, and 215-216 each bind 1-deoxy-D-xylulose 5-phosphate; these read AG and NT.

The protein belongs to the ThiG family. Homotetramer. Forms heterodimers with either ThiH or ThiS.

The protein localises to the cytoplasm. The enzyme catalyses [ThiS sulfur-carrier protein]-C-terminal-Gly-aminoethanethioate + 2-iminoacetate + 1-deoxy-D-xylulose 5-phosphate = [ThiS sulfur-carrier protein]-C-terminal Gly-Gly + 2-[(2R,5Z)-2-carboxy-4-methylthiazol-5(2H)-ylidene]ethyl phosphate + 2 H2O + H(+). It participates in cofactor biosynthesis; thiamine diphosphate biosynthesis. Functionally, catalyzes the rearrangement of 1-deoxy-D-xylulose 5-phosphate (DXP) to produce the thiazole phosphate moiety of thiamine. Sulfur is provided by the thiocarboxylate moiety of the carrier protein ThiS. In vitro, sulfur can be provided by H(2)S. The sequence is that of Thiazole synthase from Xanthomonas oryzae pv. oryzae (strain MAFF 311018).